Reading from the N-terminus, the 355-residue chain is Chorismate synthase (355 aa).

Residue R46 coordinates NADP(+). Residues 123–125, 233–234, G273, 288–292, and R314 each bind FMN; these read RAS, NG, and KPTPS.

The protein belongs to the chorismate synthase family. Homotetramer. Requires FMNH2 as cofactor.

The catalysed reaction is 5-O-(1-carboxyvinyl)-3-phosphoshikimate = chorismate + phosphate. The protein operates within metabolic intermediate biosynthesis; chorismate biosynthesis; chorismate from D-erythrose 4-phosphate and phosphoenolpyruvate: step 7/7. Catalyzes the anti-1,4-elimination of the C-3 phosphate and the C-6 proR hydrogen from 5-enolpyruvylshikimate-3-phosphate (EPSP) to yield chorismate, which is the branch point compound that serves as the starting substrate for the three terminal pathways of aromatic amino acid biosynthesis. This reaction introduces a second double bond into the aromatic ring system. The polypeptide is Chorismate synthase (Campylobacter concisus (strain 13826)).